Consider the following 88-residue polypeptide: MPIIESSIQRERLNKAERAVRAPQISAYRTAVKNFEKAAAAGADNLQELFSKTSAAIDKAETKNLIKKNKAARDKARLYKLLKAATSK.

It belongs to the bacterial ribosomal protein bS20 family.

Binds directly to 16S ribosomal RNA. The polypeptide is Small ribosomal subunit protein bS20 (Oenococcus oeni (strain ATCC BAA-331 / PSU-1)).